A 245-amino-acid chain; its full sequence is Actin-like protein 10 (245 aa).

It belongs to the actin family.

The sequence is that of Actin-like protein 10 (ACTL10) from Homo sapiens (Human).